We begin with the raw amino-acid sequence, 86 residues long: Small ribosomal subunit protein bS16 (86 aa).

The protein belongs to the bacterial ribosomal protein bS16 family.

This is Small ribosomal subunit protein bS16 from Bordetella petrii (strain ATCC BAA-461 / DSM 12804 / CCUG 43448).